Here is a 400-residue protein sequence, read N- to C-terminus: S-adenosylmethionine sensor upstream of mTORC1 (400 aa).

Arginine 99, glycine 168, aspartate 186, aspartate 198, phenylalanine 199, and serine 240 together coordinate S-adenosyl-L-methionine.

Belongs to the BMT2/SAMTOR family. In terms of assembly, interacts with the GATOR1 complex; interaction is disrupted when samtor binds S-adenosyl-L-methionine. Interacts with the KICSTOR complex; interaction is disrupted when samtor binds S-adenosyl-L-methionine.

S-adenosyl-L-methionine-binding protein that acts as an inhibitor of mTORC1 signaling via interaction with the GATOR1 and KICSTOR complexes. Acts as a sensor of S-adenosyl-L-methionine to signal methionine sufficiency to mTORC1: in presence of methionine, binds S-adenosyl-L-methionine, leading to disrupt interaction with the GATOR1 and KICSTOR complexes and promote mTORC1 signaling. Upon methionine starvation, S-adenosyl-L-methionine levels are reduced, thereby promoting the association with GATOR1 and KICSTOR, leading to inhibit mTORC1 signaling. Probably also acts as a S-adenosyl-L-methionine-dependent methyltransferase. This Xenopus laevis (African clawed frog) protein is S-adenosylmethionine sensor upstream of mTORC1.